Here is a 288-residue protein sequence, read N- to C-terminus: MAAMIRLFRSSSSSSSNSISLISRSLSTAAASETVKSQSYPHNPHSTSVDPKAKTVQWVFLGCPGVGKGTYASRLSTLLGVPHIATGDLVRDELKSSGPLSKQLAEIVNQGKLVSDEIILNLLSKRLESGEAKGEAGFILDGFPRTVRQAEILTEVTDIDLVVNLKLPERVLVEKCLGRRICSECGKNFNVASIDVAGENGAPRISMARLNPPFTVCFKLITRADDTEAIVKERLSIYWDKSQPVEDFYRSQGKLLEFDLPGGIPESWPKLLEVLNLDEQEYKLSPAA.

Residue glycine 65–threonine 70 coordinates ATP. An NMP region spans residues alanine 85–valine 114. AMP contacts are provided by residues threonine 86, arginine 91, lysine 112–valine 114, glycine 142–arginine 145, and glutamine 149. The LID stretch occupies residues glycine 178 to aspartate 226. Position 179 (arginine 179) interacts with ATP. Residues arginine 223 and arginine 234 each coordinate AMP. Glycine 262 serves as a coordination point for ATP.

The protein belongs to the adenylate kinase family. As to quaternary structure, monomer.

It localises to the cytoplasm. It catalyses the reaction AMP + ATP = 2 ADP. Catalyzes the reversible transfer of the terminal phosphate group between ATP and AMP. Plays an important role in cellular energy homeostasis and in adenine nucleotide metabolism. This chain is Adenylate kinase (ADK), found in Solanum tuberosum (Potato).